Consider the following 257-residue polypeptide: 4-hydroxy-tetrahydrodipicolinate reductase (257 aa).

NAD(+)-binding positions include 7 to 12, Asp32, 91 to 93, and 115 to 118; these read GAAGRM, GTT, and SPNF. His147 acts as the Proton donor/acceptor in catalysis. A (S)-2,3,4,5-tetrahydrodipicolinate-binding site is contributed by His148. Lys151 serves as the catalytic Proton donor. 157–158 is a binding site for (S)-2,3,4,5-tetrahydrodipicolinate; the sequence is GT.

The protein belongs to the DapB family.

It localises to the cytoplasm. It catalyses the reaction (S)-2,3,4,5-tetrahydrodipicolinate + NAD(+) + H2O = (2S,4S)-4-hydroxy-2,3,4,5-tetrahydrodipicolinate + NADH + H(+). It carries out the reaction (S)-2,3,4,5-tetrahydrodipicolinate + NADP(+) + H2O = (2S,4S)-4-hydroxy-2,3,4,5-tetrahydrodipicolinate + NADPH + H(+). Its pathway is amino-acid biosynthesis; L-lysine biosynthesis via DAP pathway; (S)-tetrahydrodipicolinate from L-aspartate: step 4/4. In terms of biological role, catalyzes the conversion of 4-hydroxy-tetrahydrodipicolinate (HTPA) to tetrahydrodipicolinate. The protein is 4-hydroxy-tetrahydrodipicolinate reductase of Archaeoglobus fulgidus (strain ATCC 49558 / DSM 4304 / JCM 9628 / NBRC 100126 / VC-16).